We begin with the raw amino-acid sequence, 338 residues long: RNA 3'-terminal phosphate cyclase (338 aa).

ATP-binding positions include Gln103 and 283 to 287; that span reads YLADQ. The active-site Tele-AMP-histidine intermediate is the His308.

This sequence belongs to the RNA 3'-terminal cyclase family. Type 1 subfamily.

It is found in the cytoplasm. The catalysed reaction is a 3'-end 3'-phospho-ribonucleotide-RNA + ATP = a 3'-end 2',3'-cyclophospho-ribonucleotide-RNA + AMP + diphosphate. Functionally, catalyzes the conversion of 3'-phosphate to a 2',3'-cyclic phosphodiester at the end of RNA. The mechanism of action of the enzyme occurs in 3 steps: (A) adenylation of the enzyme by ATP; (B) transfer of adenylate to an RNA-N3'P to produce RNA-N3'PP5'A; (C) and attack of the adjacent 2'-hydroxyl on the 3'-phosphorus in the diester linkage to produce the cyclic end product. The biological role of this enzyme is unknown but it is likely to function in some aspects of cellular RNA processing. This is RNA 3'-terminal phosphate cyclase from Escherichia coli O81 (strain ED1a).